A 110-amino-acid chain; its full sequence is MAGWFELSKSSDNQFRFVLKAGNGETILTSELYTSKTSAEKGIASVRSNSPQEERYEKKTASNGKFYFNLKAANHQIIGSSQMYATAQSRETGIASVKANGTSQTVKDNT.

Tandem repeats lie at residues 10–58 (SSDN…RYEK) and 61–109 (ASNG…VKDN).

The protein belongs to the UPF0339 family. Duplicated subfamily.

This Escherichia coli (strain K12) protein is UPF0339 protein YegP (yegP).